The chain runs to 185 residues: Ribosome-recycling factor (185 aa).

Belongs to the RRF family.

The protein resides in the cytoplasm. Functionally, responsible for the release of ribosomes from messenger RNA at the termination of protein biosynthesis. May increase the efficiency of translation by recycling ribosomes from one round of translation to another. The protein is Ribosome-recycling factor of Pseudomonas putida (strain GB-1).